The following is a 556-amino-acid chain: 2-succinyl-5-enolpyruvyl-6-hydroxy-3-cyclohexene-1-carboxylate synthase (556 aa).

It belongs to the TPP enzyme family. MenD subfamily. In terms of assembly, homodimer. The cofactor is Mg(2+). Mn(2+) serves as cofactor. Requires thiamine diphosphate as cofactor.

The enzyme catalyses isochorismate + 2-oxoglutarate + H(+) = 5-enolpyruvoyl-6-hydroxy-2-succinyl-cyclohex-3-ene-1-carboxylate + CO2. It participates in quinol/quinone metabolism; 1,4-dihydroxy-2-naphthoate biosynthesis; 1,4-dihydroxy-2-naphthoate from chorismate: step 2/7. It functions in the pathway quinol/quinone metabolism; menaquinone biosynthesis. In terms of biological role, catalyzes the thiamine diphosphate-dependent decarboxylation of 2-oxoglutarate and the subsequent addition of the resulting succinic semialdehyde-thiamine pyrophosphate anion to isochorismate to yield 2-succinyl-5-enolpyruvyl-6-hydroxy-3-cyclohexene-1-carboxylate (SEPHCHC). This chain is 2-succinyl-5-enolpyruvyl-6-hydroxy-3-cyclohexene-1-carboxylate synthase, found in Salmonella agona (strain SL483).